Reading from the N-terminus, the 469-residue chain is Pentatricopeptide repeat-containing protein At2g34370, mitochondrial (469 aa).

A mitochondrion-targeting transit peptide spans 1–65 (MVRLVCSRIL…QNRSFVQCRR (65 aa)). PPR repeat units lie at residues 142 to 172 (DARS…MPKR), 173 to 207 (NSET…GNKP), 208 to 238 (DKEI…MYRD), and 244 to 274 (SMED…MTVE). Residues 375–469 (DIGFVPATRV…NGVCSCKDYW (95 aa)) are type DYW motif.

This sequence belongs to the PPR family. PCMP-H subfamily.

Its subcellular location is the mitochondrion. This Arabidopsis thaliana (Mouse-ear cress) protein is Pentatricopeptide repeat-containing protein At2g34370, mitochondrial (PCMP-H25).